Here is a 472-residue protein sequence, read N- to C-terminus: Carboxypeptidase E (472 aa).

The N-terminal stretch at 1 to 21 (MLHAMRPVLLVAALLAVTAHA) is a signal peptide. In terms of domain architecture, Peptidase M14 spans 39 to 359 (HYHNQAQLEA…KSIFEYVWKS (321 aa)). Zn(2+)-binding residues include His-101 and Glu-104. Residue Asn-134 is glycosylated (N-linked (GlcNAc...) asparagine). A Zn(2+)-binding site is contributed by His-232. Catalysis depends on Glu-329, which acts as the Proton donor/acceptor. 2 N-linked (GlcNAc...) asparagine glycosylation sites follow: Asn-385 and Asn-428.

It belongs to the peptidase M14 family. Zn(2+) is required as a cofactor. Expression is restricted to the nervous system.

Its subcellular location is the cell projection. The protein resides in the axon. The protein localises to the perikaryon. It is found in the cytoplasmic vesicle. It localises to the secretory vesicle lumen. The enzyme catalyses Release of C-terminal arginine or lysine residues from polypeptides.. Functionally, during FMRFamide-like peptide (FaRPs or FLP) and neuropeptide-like protein (NLP) precursor processing, catalyzes the removal of Arg or Lys residues from the C-terminus following the initial endoprotease cleavage. By processing neuropeptides, modulates basal acetylcholine release at the ventral cord neuromuscular junctions. Involved in egg-laying, defecation and locomotion. By processing FLP neuropeptides, regulates the turning step of male mating behavior. Involved in reducing pharyngeal pumping in response to high CO(2) levels. The sequence is that of Carboxypeptidase E from Caenorhabditis elegans.